The primary structure comprises 341 residues: Heat-inducible transcription repressor HrcA (341 aa).

The protein belongs to the HrcA family.

Its function is as follows. Negative regulator of class I heat shock genes (grpE-dnaK-dnaJ and groELS operons). Prevents heat-shock induction of these operons. The polypeptide is Heat-inducible transcription repressor HrcA (Brevibacillus brevis (strain 47 / JCM 6285 / NBRC 100599)).